The following is a 674-amino-acid chain: Transcription activator of gluconeogenesis PMAA_028970 (674 aa).

The segment at 1–46 is disordered; the sequence is MMDTDKDDLPSATDHSEHESGDAVKVEGGASKTASNSKDPSRPRRK. The segment covering 14 to 25 has biased composition (basic and acidic residues); it reads DHSEHESGDAVK. Residues 52 to 80 constitute a DNA-binding region (zn(2)-C6 fungal-type); it reads CFACQRAHLTCGDERPCQRCIKRGLQDAC. 4 disordered regions span residues 117 to 181, 250 to 321, 344 to 374, and 519 to 557; these read ISPT…ATPA, TGAG…SGLY, IGSN…SPMK, and NLNV…PGPN. Residues 120-148 are compositionally biased toward polar residues; the sequence is TEYTQNGTNNAQQQQQKSGTIYASSTPSY. A compositionally biased stretch (low complexity) spans 149 to 163; the sequence is NNNNGTFDTNNATNT. Composition is skewed to polar residues over residues 269 to 278 and 285 to 294; these read GQRSNSQQFG and TTESPSQQSF. 2 stretches are compositionally biased toward low complexity: residues 348–366 and 529–540; these read TFAS…IAPS and NTSSQSDSTSSS.

This sequence belongs to the ERT1/acuK family.

The protein localises to the nucleus. In terms of biological role, transcription factor which regulates nonfermentable carbon utilization. Activator of gluconeogenetic genes. In Talaromyces marneffei (strain ATCC 18224 / CBS 334.59 / QM 7333) (Penicillium marneffei), this protein is Transcription activator of gluconeogenesis PMAA_028970.